We begin with the raw amino-acid sequence, 366 residues long: 5-amino-6-(D-ribitylamino)uracil--L-tyrosine 4-hydroxyphenyl transferase (366 aa).

A Radical SAM core domain is found at 51–290; the sequence is RCGNAITWVK…MIAISRLFLD (240 aa). Residues Cys-70, Cys-74, and Cys-77 each coordinate [4Fe-4S] cluster.

It belongs to the radical SAM superfamily. CofH family. In terms of assembly, consists of two subunits, CofG and CofH. [4Fe-4S] cluster is required as a cofactor.

The enzyme catalyses 5-amino-6-(D-ribitylamino)uracil + L-tyrosine + S-adenosyl-L-methionine = 5-amino-5-(4-hydroxybenzyl)-6-(D-ribitylimino)-5,6-dihydrouracil + 2-iminoacetate + 5'-deoxyadenosine + L-methionine + H(+). Its pathway is cofactor biosynthesis; coenzyme F0 biosynthesis. Functionally, catalyzes the radical-mediated synthesis of 5-amino-5-(4-hydroxybenzyl)-6-(D-ribitylimino)-5,6-dihydrouracil from 5-amino-6-(D-ribitylamino)uracil and L-tyrosine. In Methanospirillum hungatei JF-1 (strain ATCC 27890 / DSM 864 / NBRC 100397 / JF-1), this protein is 5-amino-6-(D-ribitylamino)uracil--L-tyrosine 4-hydroxyphenyl transferase.